We begin with the raw amino-acid sequence, 133 residues long: ATP synthase epsilon chain (133 aa).

The protein belongs to the ATPase epsilon chain family. As to quaternary structure, F-type ATPases have 2 components, CF(1) - the catalytic core - and CF(0) - the membrane proton channel. CF(1) has five subunits: alpha(3), beta(3), gamma(1), delta(1), epsilon(1). CF(0) has three main subunits: a, b and c.

The protein localises to the cell membrane. Its function is as follows. Produces ATP from ADP in the presence of a proton gradient across the membrane. This Geobacillus thermodenitrificans (strain NG80-2) protein is ATP synthase epsilon chain.